Consider the following 359-residue polypeptide: Protein HEXIM1 (359 aa).

Residues Met1–His163 form a disordered region. The span at Tyr9–Thr19 shows a compositional bias: polar residues. Composition is skewed to basic and acidic residues over residues Pro34–Trp47 and Cys84–Asn93. Ser97 and Ser98 each carry phosphoserine. A compositionally biased stretch (basic residues) spans Leu148 to His163. The tract at residues Lys150–Lys177 is basic region; mediates nuclear localization and interaction with 7SK snRNA and NR3C1. Residues Pro202–Thr205 are interaction with P-TEFb. The segment at Met210–Gly250 is autoinhibitory acidic region; in absence of 7SK snRNA interacts with the basic region preventing interaction with P-TEFb and modulating subcellular localization. The disordered stretch occupies residues His213–Phe262. Phosphoserine is present on Ser233. At Thr236 the chain carries Phosphothreonine. Residues Thr236 to Gly251 show a composition bias toward acidic residues. A phosphoserine mark is found at Ser237, Ser252, and Ser260. A coiled-coil region spans residues Ser283–Gln349. The segment at Glu286–Arg314 is mediates interaction with CCNT1. A required for inhibition of ESR1-dependent transcription region spans residues Leu310–Ser355.

Belongs to the HEXIM family. As to quaternary structure, homooligomer and heterooligomer with HEXIM2; probably dimeric. Core component of the 7SK RNP complex, at least composed of 7SK RNA, LARP7, MEPCE, HEXIM1 (or HEXIM2) and P-TEFb (composed of CDK9 and CCNT1/cyclin-T1). Interacts with the N-CoR complex through NCOR1. Interacts with ESR1 and NR3C1. May interact with NF-kappa-B through RELA. Interacts with CCNT2; mediates formation of a tripartite complex with KPNA2. Part of the HDP-RNP complex composed of at least HEXIM1, PRKDC, XRCC5, XRCC6, paraspeckle proteins (SFPQ, NONO, PSPC1, RBM14, and MATR3) and NEAT1 non-coding RNA. In terms of tissue distribution, ubiquitously expressed with higher expression in placenta. HEXIM1 and HEXIM2 are differentially expressed. Expressed in endocrine tissues.

It localises to the nucleus. The protein resides in the cytoplasm. In terms of biological role, transcriptional regulator which functions as a general RNA polymerase II transcription inhibitor. Core component of the 7SK RNP complex: in cooperation with 7SK snRNA sequesters P-TEFb in a large inactive 7SK snRNP complex preventing RNA polymerase II phosphorylation and subsequent transcriptional elongation. May also regulate NF-kappa-B, ESR1, NR3C1 and CIITA-dependent transcriptional activity. Plays a role in the regulation of DNA virus-mediated innate immune response by assembling into the HDP-RNP complex, a complex that serves as a platform for IRF3 phosphorylation and subsequent innate immune response activation through the cGAS-STING pathway. The chain is Protein HEXIM1 (HEXIM1) from Homo sapiens (Human).